A 197-amino-acid polypeptide reads, in one-letter code: MSHFFAHLSRLKLINRWPLMRNVRTENVSEHSLQVAFVAHALAIIKNRKFSGNVNAERIALLAMYHDASEVITGDLPTPIKYHNPHIAREYKKIEKIAQKKLLEMLPAELQEDFRPILDDSQHTEEEISIVKQADALCAYLKCLEELSAGNSEFNLAKARLEKTLAARHSQEMDYFMTVFVPGFSLSLDEISLDIPD.

Residues 16-17 (RW) and H31 each bind substrate. Residues 28 to 140 (VSEHSLQVAF…VKQADALCAY (113 aa)) form the HD domain. A divalent metal cation-binding residues include H31, H66, and D67. Residues D67, 75 to 78 (DLPT), and D135 contribute to the substrate site. An a divalent metal cation-binding site is contributed by D135.

This sequence belongs to the 5DNU family. As to quaternary structure, homodimer. The cofactor is a divalent metal cation.

Its subcellular location is the cytoplasm. The enzyme catalyses a 2'-deoxyribonucleoside 5'-phosphate + H2O = a 2'-deoxyribonucleoside + phosphate. Its function is as follows. Catalyzes the strictly specific dephosphorylation of 2'-deoxyribonucleoside 5'-monophosphates. This is 5'-deoxynucleotidase yfbR from Photorhabdus temperata.